The sequence spans 203 residues: Holliday junction branch migration complex subunit RuvA (203 aa).

Residues 1–64 are domain I; it reads MIGRLRGIII…EDAQLLYGFN (64 aa). A domain II region spans residues 65–142; sequence NKQERTLFKE…KGLHGDLFTP (78 aa). The flexible linker stretch occupies residues 143-154; it reads AADLVLTSPASP. The interval 155–203 is domain III; the sequence is ATDDAEQEAVAALVALGYKPQEASRMVSKIARPDASSETLIREALHAAL.

The protein belongs to the RuvA family. Homotetramer. Forms an RuvA(8)-RuvB(12)-Holliday junction (HJ) complex. HJ DNA is sandwiched between 2 RuvA tetramers; dsDNA enters through RuvA and exits via RuvB. An RuvB hexamer assembles on each DNA strand where it exits the tetramer. Each RuvB hexamer is contacted by two RuvA subunits (via domain III) on 2 adjacent RuvB subunits; this complex drives branch migration. In the full resolvosome a probable DNA-RuvA(4)-RuvB(12)-RuvC(2) complex forms which resolves the HJ.

It localises to the cytoplasm. In terms of biological role, the RuvA-RuvB-RuvC complex processes Holliday junction (HJ) DNA during genetic recombination and DNA repair, while the RuvA-RuvB complex plays an important role in the rescue of blocked DNA replication forks via replication fork reversal (RFR). RuvA specifically binds to HJ cruciform DNA, conferring on it an open structure. The RuvB hexamer acts as an ATP-dependent pump, pulling dsDNA into and through the RuvAB complex. HJ branch migration allows RuvC to scan DNA until it finds its consensus sequence, where it cleaves and resolves the cruciform DNA. This Escherichia fergusonii (strain ATCC 35469 / DSM 13698 / CCUG 18766 / IAM 14443 / JCM 21226 / LMG 7866 / NBRC 102419 / NCTC 12128 / CDC 0568-73) protein is Holliday junction branch migration complex subunit RuvA.